The sequence spans 104 residues: Large ribosomal subunit protein uL24 (104 aa).

It belongs to the universal ribosomal protein uL24 family. In terms of assembly, part of the 50S ribosomal subunit.

One of two assembly initiator proteins, it binds directly to the 5'-end of the 23S rRNA, where it nucleates assembly of the 50S subunit. Functionally, one of the proteins that surrounds the polypeptide exit tunnel on the outside of the subunit. This chain is Large ribosomal subunit protein uL24, found in Psychromonas ingrahamii (strain DSM 17664 / CCUG 51855 / 37).